Consider the following 246-residue polypeptide: 5'-nucleotidase SurE (246 aa).

Residues Asp-8, Asp-9, Ser-39, and Asn-91 each contribute to the a divalent metal cation site.

It belongs to the SurE nucleotidase family. The cofactor is a divalent metal cation.

The protein localises to the cytoplasm. The catalysed reaction is a ribonucleoside 5'-phosphate + H2O = a ribonucleoside + phosphate. In terms of biological role, nucleotidase that shows phosphatase activity on nucleoside 5'-monophosphates. The polypeptide is 5'-nucleotidase SurE (Histophilus somni (strain 129Pt) (Haemophilus somnus)).